An 880-amino-acid polypeptide reads, in one-letter code: Valine--tRNA ligase (880 aa).

A 'HIGH' region motif is present at residues 49 to 59; it reads PNVTGRLHLGH. Positions 525–529 match the 'KMSKS' region motif; it reads KMSKS. Position 528 (Lys-528) interacts with ATP. Residues 809–879 are a coiled coil; the sequence is LEGLINIDEE…AVQKRMAELK (71 aa).

This sequence belongs to the class-I aminoacyl-tRNA synthetase family. ValS type 1 subfamily. As to quaternary structure, monomer.

It is found in the cytoplasm. It carries out the reaction tRNA(Val) + L-valine + ATP = L-valyl-tRNA(Val) + AMP + diphosphate. As ValRS can inadvertently accommodate and process structurally similar amino acids such as threonine, to avoid such errors, it has a 'posttransfer' editing activity that hydrolyzes mischarged Thr-tRNA(Val) in a tRNA-dependent manner. Catalyzes the attachment of valine to tRNA(Val). In Bacillus subtilis (strain 168), this protein is Valine--tRNA ligase.